A 1180-amino-acid chain; its full sequence is uncharacterized protein (1180 aa).

Disordered stretches follow at residues 229-280, 431-465, 484-575, 730-758, 810-986, 1045-1109, and 1125-1152; these read RQQG…DTSI, KQPP…PPLK, SRDT…PNMR, GRPL…ASRT, GKAE…ASWD, RLQE…ELEM, and ERLE…QKEE. A compositionally biased stretch (acidic residues) spans 269–279; it reads QEDETQAEDTS. The span at 431–443 shows a compositional bias: basic residues; it reads KQPPKEKAHRRGA. Positions 486–497 are enriched in polar residues; it reads DTLSPQGSSSLP. The span at 509–518 shows a compositional bias: basic residues; sequence SKARHTRVHS. 3 stretches are compositionally biased toward basic and acidic residues: residues 730–745, 826–837, and 846–856; these read GRPL…DPEP, SHERDLINEAKR, and TKGPKSEREGK. A compositionally biased stretch (basic residues) spans 872-889; sequence KAKKKLEKKTRPQRKRTQ. Residues 937 to 959 are compositionally biased toward polar residues; that stretch reads QESQVSLDGRSSPSQIATVTGNM. Composition is skewed to basic and acidic residues over residues 960 to 986, 1045 to 1106, and 1127 to 1152; these read ESKE…ASWD, RLQE…RQEE, and LEYQ…QKEE. Residues 988–1171 adopt a coiled-coil conformation; sequence LRAERAEMRW…ATKQAQEQAR (184 aa).

This is an uncharacterized protein from Homo sapiens (Human).